Here is a 124-residue protein sequence, read N- to C-terminus: Small ribosomal subunit protein uS12 (124 aa).

Asp-89 carries the post-translational modification 3-methylthioaspartic acid.

Belongs to the universal ribosomal protein uS12 family. Part of the 30S ribosomal subunit. Contacts proteins S8 and S17. May interact with IF1 in the 30S initiation complex.

Its function is as follows. With S4 and S5 plays an important role in translational accuracy. Functionally, interacts with and stabilizes bases of the 16S rRNA that are involved in tRNA selection in the A site and with the mRNA backbone. Located at the interface of the 30S and 50S subunits, it traverses the body of the 30S subunit contacting proteins on the other side and probably holding the rRNA structure together. The combined cluster of proteins S8, S12 and S17 appears to hold together the shoulder and platform of the 30S subunit. The sequence is that of Small ribosomal subunit protein uS12 from Aliivibrio salmonicida (strain LFI1238) (Vibrio salmonicida (strain LFI1238)).